The sequence spans 209 residues: Egg case collagen (209 aa).

The interval 1–129 (VYMSGXGKPP…YKGNHGFYLV (129 aa)) is nonhelical region. Residues 130–209 (LPAGYPGTPG…DPGLPGEYGV (80 aa)) are triple-helical region. The interval 138–209 (PGTPGPRGGP…DPGLPGEYGV (72 aa)) is disordered. The span at 142–162 (GPRGGPGDPGMPGEPGVGFPG) shows a compositional bias: gly residues.

Functionally, major component of the egg case wall which is secreted by the oviduct. The egg case combines mechanical strength and toughness with high permeability to small molecules and ions. The polypeptide is Egg case collagen (Scyliorhinus canicula (Small-spotted catshark)).